A 108-amino-acid polypeptide reads, in one-letter code: ER membrane protein complex subunit 6 (108 aa).

3 helical membrane-spanning segments follow: residues 21 to 41, 45 to 65, and 86 to 106; these read VVSF…GILG, YEGL…LFAL, and ILDG…LVYV.

The protein belongs to the EMC6 family.

It is found in the endoplasmic reticulum membrane. In Schizosaccharomyces pombe (strain 972 / ATCC 24843) (Fission yeast), this protein is ER membrane protein complex subunit 6.